A 553-amino-acid polypeptide reads, in one-letter code: MRSAIIKEGPERAANRSLLKATGVTDSEMKKPFIAVVNSWNEIVPGHIHLDKLAEAVKAGIRNAGGVPFEFHTIGVCDGLAMGHEGMKYSLPSREVIEDTIELMVRAHQFDGMVLIPTCDKIVPGHLMAAGRLDIPAIVVTGGPMLPGYVDDKYTDLISVFEGVGAYSAGKLSEAELKRLENLSCAGAGSCAGMFTANTMACMTEALGLSLPGCATAHAVDAKKVRIAKESGERIVALVKENLTPRKIVTQKSFENAIMVDMAVGGSTNTTLHLPALAHEFGLELPLKTFDELSRTTPHLISLRPGGPNFMLHFDRAGGVEAVVQRLASKLHLDQLTVNGKTIGENLDELEIVNPKLNAEIITTLENPIHAEGGIAVLKGSLAPDGSVVKQAAVDPKMRVHTGPAKVYDCEEDAMKSILAGDVKPGDIVVIRYEGPKGGPGMREMLAATAAIGGMGLLESVALITDGRFSGGTRGPCIGHVSPEASEGGPIGLVKDGDLIEINIPERILNLKVTEEELEKRKAAFVPPKKEVTGYLARYQRSVHSANTGGIVD.

D78 lines the Mg(2+) pocket. C119 contributes to the [2Fe-2S] cluster binding site. Mg(2+) is bound by residues D120 and K121. Residue K121 is modified to N6-carboxylysine. C191 is a [2Fe-2S] cluster binding site. A Mg(2+)-binding site is contributed by E444. Catalysis depends on S470, which acts as the Proton acceptor.

Belongs to the IlvD/Edd family. Homodimer. Requires [2Fe-2S] cluster as cofactor. Mg(2+) is required as a cofactor.

The catalysed reaction is (2R)-2,3-dihydroxy-3-methylbutanoate = 3-methyl-2-oxobutanoate + H2O. It carries out the reaction (2R,3R)-2,3-dihydroxy-3-methylpentanoate = (S)-3-methyl-2-oxopentanoate + H2O. It functions in the pathway amino-acid biosynthesis; L-isoleucine biosynthesis; L-isoleucine from 2-oxobutanoate: step 3/4. It participates in amino-acid biosynthesis; L-valine biosynthesis; L-valine from pyruvate: step 3/4. Functionally, functions in the biosynthesis of branched-chain amino acids. Catalyzes the dehydration of (2R,3R)-2,3-dihydroxy-3-methylpentanoate (2,3-dihydroxy-3-methylvalerate) into 2-oxo-3-methylpentanoate (2-oxo-3-methylvalerate) and of (2R)-2,3-dihydroxy-3-methylbutanoate (2,3-dihydroxyisovalerate) into 2-oxo-3-methylbutanoate (2-oxoisovalerate), the penultimate precursor to L-isoleucine and L-valine, respectively. The chain is Dihydroxy-acid dehydratase 1 from Methanosarcina acetivorans (strain ATCC 35395 / DSM 2834 / JCM 12185 / C2A).